A 283-amino-acid polypeptide reads, in one-letter code: Nucleotide-binding protein Sama_3091 (283 aa).

8–15 contributes to the ATP binding site; the sequence is GRSGSGKS. 56-59 is a binding site for GTP; the sequence is DIRN.

Belongs to the RapZ-like family.

In terms of biological role, displays ATPase and GTPase activities. The polypeptide is Nucleotide-binding protein Sama_3091 (Shewanella amazonensis (strain ATCC BAA-1098 / SB2B)).